The primary structure comprises 745 residues: Exocyst complex component 3 (745 aa).

Residue K28 is modified to N6-acetyllysine.

Belongs to the SEC6 family. As to quaternary structure, the exocyst complex is composed of EXOC1, EXOC2, EXOC3, EXOC4, EXOC5, EXOC6, EXOC7 and EXOC8. Interacts with EXOC3L1. Interacts with BIRC6/bruce. Interacts with MYRIP. Interacts with SLC6A9. Expressed in epididymis (at protein level).

Its subcellular location is the cytoplasm. It is found in the perinuclear region. The protein localises to the cell projection. The protein resides in the growth cone. It localises to the midbody. Its subcellular location is the golgi apparatus. It is found in the neuron projection. Its function is as follows. Component of the exocyst complex involved in the docking of exocytic vesicles with fusion sites on the plasma membrane. In Homo sapiens (Human), this protein is Exocyst complex component 3 (EXOC3).